A 153-amino-acid polypeptide reads, in one-letter code: IAA acetyltransferase (153 aa).

In terms of domain architecture, N-acetyltransferase spans 4 to 153 (VTIARESPLQ…PLSLFMEKPL (150 aa)).

Participates in the tryptophan-dependent indole-3-acetic acid production, which is a phytohormone released by A.brasilense. The sequence is that of IAA acetyltransferase from Azospirillum brasilense.